Consider the following 197-residue polypeptide: Nucleoside triphosphate pyrophosphatase (197 aa).

Catalysis depends on aspartate 71, which acts as the Proton acceptor.

The protein belongs to the Maf family. A divalent metal cation serves as cofactor.

The protein resides in the cytoplasm. The enzyme catalyses a ribonucleoside 5'-triphosphate + H2O = a ribonucleoside 5'-phosphate + diphosphate + H(+). The catalysed reaction is a 2'-deoxyribonucleoside 5'-triphosphate + H2O = a 2'-deoxyribonucleoside 5'-phosphate + diphosphate + H(+). Its function is as follows. Nucleoside triphosphate pyrophosphatase. May have a dual role in cell division arrest and in preventing the incorporation of modified nucleotides into cellular nucleic acids. The sequence is that of Nucleoside triphosphate pyrophosphatase from Synechococcus sp. (strain JA-2-3B'a(2-13)) (Cyanobacteria bacterium Yellowstone B-Prime).